Here is a 133-residue protein sequence, read N- to C-terminus: Small ribosomal subunit protein bS16 (133 aa).

Residues 83-101 (KRDARSNPKKAEPGKKAQE) show a composition bias toward basic and acidic residues. A disordered region spans residues 83-102 (KRDARSNPKKAEPGKKAQER).

Belongs to the bacterial ribosomal protein bS16 family.

This is Small ribosomal subunit protein bS16 from Mesorhizobium japonicum (strain LMG 29417 / CECT 9101 / MAFF 303099) (Mesorhizobium loti (strain MAFF 303099)).